Reading from the N-terminus, the 381-residue chain is Guanine nucleotide-binding protein G(olf) subunit alpha (381 aa).

The tract at residues 1–25 is disordered; sequence MGCLGGNSKTTEDQGVDEKERREAN. Gly-2 is lipidated: N-palmitoyl glycine. Cys-3 carries the S-palmitoyl cysteine lipid modification. Residues 10–25 are compositionally biased toward basic and acidic residues; the sequence is TTEDQGVDEKERREAN. The region spanning 41–381 is the G-alpha domain; the sequence is ATHRLLLLGA…RMHLKQYELL (341 aa). Positions 44–57 are G1 motif; the sequence is RLLLLGAGESGKST. Residues Glu-52, Ser-53, Gly-54, Lys-55, Ser-56, and Thr-57 each coordinate GTP. Ser-56 provides a ligand contact to Mg(2+). Phosphothreonine is present on Thr-178. A G2 motif region spans residues 183 to 191; sequence DLLRCRVLT. 2 residues coordinate GTP: Leu-185 and Arg-186. Arg-188 carries the ADP-ribosylarginine; by cholera toxin modification. Thr-191 serves as a coordination point for GTP. Residues Thr-191 and Asp-210 each coordinate Mg(2+). The segment at 206 to 215 is G3 motif; that stretch reads FHMFDVGGQR. Residues Gly-213, Asn-279, Lys-280, Asp-282, and Ala-353 each contribute to the GTP site. The G4 motif stretch occupies residues 275–282; that stretch reads ILFLNKQD. A G5 motif region spans residues 351–356; it reads TCAVDT.

It belongs to the G-alpha family. G(s) subfamily. As to quaternary structure, g proteins are composed of 3 units; alpha, beta and gamma. The alpha chain contains the guanine nucleotide binding site. Interacts with GAS2L2. Interacts (GDP-bound form) with RIC8B (via C-terminus); promoting GNAL folding and association with the plasma membrane. In terms of tissue distribution, detected in olfactory neuroepithelium, brain, testis, and to a lower extent in retina, lung alveoli, spleen. Trace amounts where seen in kidney, adrenal gland and liver. Found to be expressed in all the insulinomas examined.

The protein localises to the cell membrane. It carries out the reaction GTP + H2O = GDP + phosphate + H(+). In terms of biological role, guanine nucleotide-binding protein (G protein) involved as transducer in olfactory signal transduction controlled by G protein-coupled receptors (GPCRs). Contains the guanine nucleotide binding site and alternates between an active, GTP-bound state and an inactive, GDP-bound state. Signaling by an activated GPCR promotes GDP release and GTP binding. The alpha subunit has a low GTPase activity that converts bound GTP to GDP, thereby terminating the signal. Both GDP release and GTP hydrolysis are modulated by numerous regulatory proteins. GNAL/G(olf) alpha specifically mediates olfactory signal transduction within the olfactory neuroepithelium and the basal ganglia following GPCRs activation. Acts by promoting the specific activation of adenylyl cyclase ADCY3, resulting in increased levels of the signaling molecule cAMP. The sequence is that of Guanine nucleotide-binding protein G(olf) subunit alpha from Homo sapiens (Human).